A 308-amino-acid chain; its full sequence is N-acetyl-gamma-glutamyl-phosphate reductase (308 aa).

Cysteine 116 is an active-site residue.

Belongs to the NAGSA dehydrogenase family. Type 2 subfamily.

It is found in the cytoplasm. It catalyses the reaction N-acetyl-L-glutamate 5-semialdehyde + phosphate + NADP(+) = N-acetyl-L-glutamyl 5-phosphate + NADPH + H(+). It functions in the pathway amino-acid biosynthesis; L-arginine biosynthesis; N(2)-acetyl-L-ornithine from L-glutamate: step 3/4. In terms of biological role, catalyzes the NADPH-dependent reduction of N-acetyl-5-glutamyl phosphate to yield N-acetyl-L-glutamate 5-semialdehyde. This is N-acetyl-gamma-glutamyl-phosphate reductase from Mesorhizobium japonicum (strain LMG 29417 / CECT 9101 / MAFF 303099) (Mesorhizobium loti (strain MAFF 303099)).